The chain runs to 37 residues: Large ribosomal subunit protein bL36c (37 aa).

Belongs to the bacterial ribosomal protein bL36 family.

It is found in the plastid. The protein resides in the chloroplast. The sequence is that of Large ribosomal subunit protein bL36c from Mesembryanthemum crystallinum (Common ice plant).